A 228-amino-acid chain; its full sequence is UPF0173 metal-dependent hydrolase Lm4b_01588 (228 aa).

The protein belongs to the UPF0173 family.

In Listeria monocytogenes serotype 4b (strain CLIP80459), this protein is UPF0173 metal-dependent hydrolase Lm4b_01588.